The primary structure comprises 355 residues: Glucose-6-phosphatase 2 (355 aa).

Residues 1–24 (MDFLHRNGVLIIQHLQKDYRAYYT) are Lumenal-facing. The chain crosses the membrane as a helical span at residues 25–45 (FLNFMSNVGDPRNIFFIYFPL). The Cytoplasmic segment spans residues 46 to 56 (CFQFNQTVGTK). The chain crosses the membrane as a helical span at residues 57–77 (MIWVAVIGDWLNLIFKWILFG). The Lumenal segment spans residues 78–115 (HRPYWWVQETQIYPNHSSPCLEQFPTTCETGPGSPSGH). Arginine 79 contributes to the substrate binding site. A glycan (N-linked (GlcNAc...) asparagine) is linked at asparagine 92. Histidine 115 serves as the catalytic Proton donor. A helical membrane pass occupies residues 116–136 (AMGASCVWYVMVTAALSHTVC). Residues 137–146 (GMDKFSITLH) lie on the Cytoplasmic side of the membrane. A helical membrane pass occupies residues 147 to 167 (RLTWSFLWSVFWLIQISVCIS). Position 168 (arginine 168) is a topological domain, lumenal. Position 168 (arginine 168) interacts with substrate. Residues 169–189 (VFIATHFPHQVILGVIGGMLV) traverse the membrane as a helical segment. The Nucleophile role is filled by histidine 174. At 190 to 211 (AEAFEHTPGIQTASLGTYLKTN) the chain is on the cytoplasmic side. The chain crosses the membrane as a helical span at residues 212-232 (LFLFLFAVGFYLLLRVLNIDL). At 233–261 (LWSVPIAKKWCANPDWIHIDTTPFAGLVR) the chain is on the lumenal side. A helical membrane pass occupies residues 262-282 (NLGVLFGLGFAINSEMFLLSC). Residues 283-293 (RGGNNYTLSFR) lie on the Cytoplasmic side of the membrane. A helical transmembrane segment spans residues 294 to 314 (LLCALTSLTILQLYHFLQIPT). At 315–318 (HEEH) the chain is on the lumenal side. The helical transmembrane segment at 319–339 (LFYVLSFCKSASIPLTVVAFI) threads the bilayer. Topologically, residues 340-355 (PYSVHMLMKQSGKKSQ) are cytoplasmic. A Prevents secretion from ER motif is present at residues 352–355 (KKSQ).

The protein belongs to the glucose-6-phosphatase family. N-glycosylated; the non-glycosylated form is more unstable and is degraded through the proteasome. In terms of tissue distribution, specifically expressed in pancreas and also detected to a lower extent in testis. Expressed by most islet cells in the pancreas (at protein level).

Its subcellular location is the endoplasmic reticulum membrane. It catalyses the reaction D-glucose 6-phosphate + H2O = D-glucose + phosphate. The protein operates within carbohydrate biosynthesis; gluconeogenesis. Functionally, may hydrolyze glucose-6-phosphate to glucose in the endoplasmic reticulum. May be responsible for glucose production through glycogenolysis and gluconeogenesis. The chain is Glucose-6-phosphatase 2 (G6PC2) from Homo sapiens (Human).